Here is a 261-residue protein sequence, read N- to C-terminus: Phosphate import ATP-binding protein PstB 4 (261 aa).

One can recognise an ABC transporter domain in the interval 8–256; the sequence is IKVNNLSFYY…PHDSRTREYV (249 aa). Position 40–47 (40–47) interacts with ATP; sequence GPSGCGKS.

The protein belongs to the ABC transporter superfamily. Phosphate importer (TC 3.A.1.7) family. In terms of assembly, the complex is composed of two ATP-binding proteins (PstB), two transmembrane proteins (PstC and PstA) and a solute-binding protein (PstS).

The protein localises to the cell inner membrane. The catalysed reaction is phosphate(out) + ATP + H2O = ADP + 2 phosphate(in) + H(+). Functionally, part of the ABC transporter complex PstSACB involved in phosphate import. Responsible for energy coupling to the transport system. The protein is Phosphate import ATP-binding protein PstB 4 of Trichormus variabilis (strain ATCC 29413 / PCC 7937) (Anabaena variabilis).